The sequence spans 352 residues: Strictosidine synthase (352 aa).

Residues 1–31 (MANFSESKSMMAVFFMFFLLLLSSSSSSSSS) form the signal peptide. 2 N-linked (GlcNAc...) asparagine glycosylation sites follow: Asn95 and Asn187.

Belongs to the strictosidine synthase family. As to quaternary structure, monomer.

The protein resides in the vacuole. The catalysed reaction is 3alpha(S)-strictosidine + H2O = secologanin + tryptamine. It functions in the pathway alkaloid biosynthesis; 3alpha(S)-strictosidine biosynthesis; 3alpha(S)-strictosidine from secologanin and tryptamine: step 1/1. Its function is as follows. Catalyzes the stereospecific condensation of tryptamine with secologanin to form strictosidine, the key intermediate of indole alkaloid biosynthesis. The chain is Strictosidine synthase (STR1) from Catharanthus roseus (Madagascar periwinkle).